The primary structure comprises 160 residues: RNA pyrophosphohydrolase (160 aa).

Residues 10–154 (PYRKCVGVVL…KRDVYEQVFD (145 aa)) enclose the Nudix hydrolase domain. Positions 44 to 65 (GGIEDGEDARTAALRELVEETG) match the Nudix box motif.

This sequence belongs to the Nudix hydrolase family. RppH subfamily. A divalent metal cation is required as a cofactor.

Functionally, accelerates the degradation of transcripts by removing pyrophosphate from the 5'-end of triphosphorylated RNA, leading to a more labile monophosphorylated state that can stimulate subsequent ribonuclease cleavage. The protein is RNA pyrophosphohydrolase of Dinoroseobacter shibae (strain DSM 16493 / NCIMB 14021 / DFL 12).